The following is a 217-amino-acid chain: MVTFVSEMRIPVVIPYKPIQPKTRLSCILTDEEREDFAFMMLRDVVNAVKNAGCSPLILATAPVELDDVPVRILEEGLNETINGFCEGNDEPLAIVMADLALADRSAILTLLTSGGDLAIAPGRGGGTNAIYVRSAKMFQAQYYGMSYEKHVRYGTDAGLMVKIIDSFRLYCDIDEQDDLIEVFIHNTGYSREWLISHGFEIAMKKSRIGVKRPGYE.

It belongs to the CofC family. In terms of assembly, homodimer.

It carries out the reaction (2S)-2-phospholactate + GTP + H(+) = (2S)-lactyl-2-diphospho-5'-guanosine + diphosphate. The protein operates within cofactor biosynthesis; coenzyme F420 biosynthesis. Functionally, guanylyltransferase that catalyzes the activation of (2S)-2-phospholactate (2-PL) as (2S)-lactyl-2-diphospho-5'-guanosine, via the condensation of 2-PL with GTP. It is involved in the biosynthesis of coenzyme F420, a hydride carrier cofactor. The chain is 2-phospho-L-lactate guanylyltransferase from Methanospirillum hungatei JF-1 (strain ATCC 27890 / DSM 864 / NBRC 100397 / JF-1).